Here is a 276-residue protein sequence, read N- to C-terminus: Large ribosomal subunit protein uL2 (276 aa).

2 disordered regions span residues 29–54 and 224–276; these read PEKS…SRRR and AMNP…RGQR. Residues 256–276 show a composition bias toward basic residues; that stretch reads YKTRSKKKPSSKLIVKRRGQR.

The protein belongs to the universal ribosomal protein uL2 family. In terms of assembly, part of the 50S ribosomal subunit. Forms a bridge to the 30S subunit in the 70S ribosome.

Its function is as follows. One of the primary rRNA binding proteins. Required for association of the 30S and 50S subunits to form the 70S ribosome, for tRNA binding and peptide bond formation. It has been suggested to have peptidyltransferase activity; this is somewhat controversial. Makes several contacts with the 16S rRNA in the 70S ribosome. This chain is Large ribosomal subunit protein uL2, found in Maridesulfovibrio salexigens (strain ATCC 14822 / DSM 2638 / NCIMB 8403 / VKM B-1763) (Desulfovibrio salexigens).